A 186-amino-acid chain; its full sequence is Ribosome-recycling factor (186 aa).

The protein belongs to the RRF family.

The protein resides in the cytoplasm. Its function is as follows. Responsible for the release of ribosomes from messenger RNA at the termination of protein biosynthesis. May increase the efficiency of translation by recycling ribosomes from one round of translation to another. The sequence is that of Ribosome-recycling factor from Acidovorax ebreus (strain TPSY) (Diaphorobacter sp. (strain TPSY)).